We begin with the raw amino-acid sequence, 138 residues long: UPF0047 protein MJ1081 (138 aa).

The protein belongs to the UPF0047 family.

The polypeptide is UPF0047 protein MJ1081 (Methanocaldococcus jannaschii (strain ATCC 43067 / DSM 2661 / JAL-1 / JCM 10045 / NBRC 100440) (Methanococcus jannaschii)).